The chain runs to 292 residues: IGIGEFGEVCSGRLKMPGKREICVAIKTLKAGYTDKQRRDFLSEASIMGQFDHPNIIRLEGVVTKCKPVMIITEYMENGSLDAFLRKNDGRFTVIQLVGILRGIASGMKYLSDMSYVHRDLAARNILVNSNLVCKVSDFGMSRVLEEDPDAAYTTREITGTYQSQGGKIPIRWTAPEAITYRKFTSASDVWSYGIVMWEVMSYGERPYWDMSNQDVIKAIEEGYRLPPPMDCPVSLHQLMLDCWQKERAERPKFSQIVNMLDKLIRNPNSLKRTGGEIARPNTTLLEPSSPE.

Residues 1 to 9 and Lys27 each bind ATP; that span reads IGIGEFGEV. The region spanning 1-265 is the Protein kinase domain; sequence IGIGEFGEVC…QIVNMLDKLI (265 aa). Residue Asp120 is the Proton acceptor of the active site. Phosphotyrosine; by autocatalysis is present on Tyr153.

This sequence belongs to the protein kinase superfamily. Tyr protein kinase family. Ephrin receptor subfamily. Widely expressed in the developing nervous system.

The protein localises to the cell membrane. It is found in the early endosome. The catalysed reaction is L-tyrosyl-[protein] + ATP = O-phospho-L-tyrosyl-[protein] + ADP + H(+). Functionally, receptor tyrosine kinase which binds membrane-bound ephrin family ligands residing on adjacent cells, leading to contact-dependent bidirectional signaling into neighboring cells. The signaling pathway downstream of the receptor is referred to as forward signaling while the signaling pathway downstream of the ephrin ligand is referred to as reverse signaling. Highly promiscuous, it has the unique property among Eph receptors to bind and to be physiologically activated by both GPI-anchored ephrin-A and transmembrane ephrin-B ligands including efna1 and efnb3. Upon activation by ephrin ligands, modulates cell morphology and integrin-dependent cell adhesion through regulation of the Rac, Rap and Rho GTPases activity. Plays an important role in the development of the nervous system controlling different steps of axonal guidance including the establishment of the corticospinal projections. This chain is Ephrin type-A receptor 4a (epha4a), found in Danio rerio (Zebrafish).